The chain runs to 726 residues: MSAALEDIKLEDIPVDDIDFSDLEKQYSVNDTVSFDQYIVVCGAPVIPEGKVAVLKKALTGLFSKAGKVVDIEFPIEDGKTKGFLFVECASPADGNKIIKAFHTKRLDLKHRLFIYTMRDVEKYNDKNFPTEFVEPEIPDFFPTSTLKSWLSDEDGRDQFVLQANEMTTVLWNSAIEDEESVVESRKNWSTNYIRFSPKGTYLFSYHPQGVVMWGGPHFDRLRRFYHPNVRTSSVSPSEKFLVTYSPDPIVVDEEDADCPFTKKNEGHQLCIWDIDSGLLQSTFPVVKSSYLQWPLVRWSYNDQYCARMVGETLVVHDVKKGFAVMDNKTLKVPGIRDFSFAPTGVKIAPFRANDKESVILAYWTPETNNMSCKATIVDVERSRVLKTVNLVQVSNVTLHWQSDSEFLCFNVERHTKSKKTQFSNLEICKLTEKDIPGDKIELKDCVVDFAWEPHGNRFGVIAVRETGDDNIAIPKNVATFFAPEKRDVKDKSTGVKKWLEVASITDKFSNTISWSPAGRYVVVATLVKPNVRRSDFVFYDMDFATDKNMNVTKDVHASLKEVATNSFPSATDMAWDPSGRFLAVWSSSLKHKMENGYKVFNVAGTIVKEEPLNSFKNFAWRPRPASLLTNAEKKKIRKNLKEWTAQFAEQDAMEADAATRDMILRQREMLKDWTEYRAEIGARFEEEFGYKTFNMIPLSNSEDDFTSVEEVKEEVLEESEEKVVE.

Residues 1–94 form a sufficient for interaction with HCR1 and TIF32 region; the sequence is MSAALEDIKL…LFVECASPAD (94 aa). The sufficient for interaction with PIC8 stretch occupies residues 1–219; it reads MSAALEDIKL…GVVMWGGPHF (219 aa). The region spanning 37–120 is the RRM domain; that stretch reads QYIVVCGAPV…HRLFIYTMRD (84 aa). WD repeat units follow at residues 142-182, 186-224, 235-283, 331-374, 442-485, 505-549, and 566-611; these read FPTS…EESV, RKNW…RLRR, VSPS…LQST, LKVP…MSCK, ELKD…FAPE, ITDK…TDKN, and NSFP…VKEE.

Belongs to the eIF-3 subunit B family. As to quaternary structure, component of the eukaryotic translation initiation factor 3 (eIF-3) complex.

The protein resides in the cytoplasm. RNA-binding component of the eukaryotic translation initiation factor 3 (eIF-3) complex, which is involved in protein synthesis of a specialized repertoire of mRNAs and, together with other initiation factors, stimulates binding of mRNA and methionyl-tRNAi to the 40S ribosome. The eIF-3 complex specifically targets and initiates translation of a subset of mRNAs involved in cell proliferation. This Vanderwaltozyma polyspora (strain ATCC 22028 / DSM 70294 / BCRC 21397 / CBS 2163 / NBRC 10782 / NRRL Y-8283 / UCD 57-17) (Kluyveromyces polysporus) protein is Eukaryotic translation initiation factor 3 subunit B.